A 96-amino-acid chain; its full sequence is Plasminogen-like protein A (96 aa).

An N-terminal signal peptide occupies residues 1-19 (MEHKEVVLLLLLFLKSGQG). The region spanning 20 to 96 (EPLDDYVNAQ…RMRDVVLFEK (77 aa)) is the PAN domain. 2 cysteine pairs are disulfide-bonded: Cys-49–Cys-73 and Cys-53–Cys-61.

Expressed in liver.

It localises to the secreted. Functionally, may bind non-covalently to lysine binding sites present in the kringle structures of plasminogen. This may interfere with the binding of fibrin or alpha-2-antiplasmin to plasminogen and may result in the localization of activity at sites necessary for extracellular matrix destruction. This Homo sapiens (Human) protein is Plasminogen-like protein A (PLGLA).